Consider the following 54-residue polypeptide: Large ribosomal subunit protein bL33A (54 aa).

The protein belongs to the bacterial ribosomal protein bL33 family.

In Myxococcus xanthus (strain DK1622), this protein is Large ribosomal subunit protein bL33A.